The sequence spans 410 residues: Cytochrome P450 CYP107DY1 (410 aa).

His-106 and Arg-110 together coordinate heme. Substrate is bound by residues Thr-249 and Glu-253. The heme site is built by Arg-302, His-358, and Cys-360.

This sequence belongs to the cytochrome P450 family. It depends on heme as a cofactor.

It catalyses the reaction mevastatin + 2 reduced [2Fe-2S]-[ferredoxin] + O2 + 2 H(+) = pravastatin lactone + 2 oxidized [2Fe-2S]-[ferredoxin] + H2O. Functionally, cytochrome P450 whose physiological substrate is unknown. In vitro, is able to catalyze the selective hydroxylation of mevastatin to pravastatin, the widely used therapeutic agent for hypercholesterolemia. The polypeptide is Cytochrome P450 CYP107DY1 (Priestia megaterium (strain ATCC 12872 / QMB1551) (Bacillus megaterium)).